A 423-amino-acid polypeptide reads, in one-letter code: GTPase ERA-like, chloroplastic (423 aa).

Residues 1–60 (MELGLALRLVAPPPRLPCRALQPPPMPCFSPCAARRSRIRSSRLERRVGVVVSGGSMASL) constitute a chloroplast transit peptide. Positions 124 to 294 (RSGYVAVLGK…KEWILSKLPL (171 aa)) constitute an Era-type G domain. The segment at 132 to 139 (GKPNVGKS) is G1. 132-139 (GKPNVGKS) contacts GTP. Residues 158 to 162 (QTTRH) form a G2 region. The tract at residues 179–182 (DTPG) is G3. Residues 179 to 183 (DTPGV) and 244 to 247 (NKKD) contribute to the GTP site. Positions 244 to 247 (NKKD) are G4. The segment at 273–275 (ISA) is G5. Positions 325 to 402 (YRQEIPYACQ…YLEIMVKVKE (78 aa)) constitute a KH type-2 domain.

The protein belongs to the TRAFAC class TrmE-Era-EngA-EngB-Septin-like GTPase superfamily. Era GTPase family.

The protein resides in the plastid. It is found in the chloroplast stroma. Its subcellular location is the chloroplast nucleoid. Its function is as follows. Nuclear genome-encoded probable GTPase involved in ribosome biogenesis in chloroplasts. Plays a role in 16S rRNA maturation in plastids and may contribute to the assembly of the small (30S) ribosomal subunit. The protein is GTPase ERA-like, chloroplastic of Oryza sativa subsp. japonica (Rice).